We begin with the raw amino-acid sequence, 328 residues long: MRIIFWGTPEYSVKSLEVLKKSDHDIVAVITQPDKKRSRGNKLISSPVKEYATKENIPVFTPETIKENIQFISILNDLSCDLFIVIAYGKILPKAILDIPKYKSWNAHASLLPRWRGAAPIQWSILEGDKITGVGIMRMEEGLDTGDVLVEKQIKIENNDNLKTLTKKLSDLSSELFLRAISDIEQNKNRDINLLLKKQTDFKRELKYARMINKLDYIINWENSATDIYRKINALYPRANTTYKRKNLKIIKIKILTTHEIHNKNYKILSNVFKPGLIIGLIKNVGIIITTKTDPILLLEAKLEGKKVSSQNQLIQQLNPVIGENFSD.

110 to 113 (SLLP) provides a ligand contact to (6S)-5,6,7,8-tetrahydrofolate.

The protein belongs to the Fmt family.

The catalysed reaction is L-methionyl-tRNA(fMet) + (6R)-10-formyltetrahydrofolate = N-formyl-L-methionyl-tRNA(fMet) + (6S)-5,6,7,8-tetrahydrofolate + H(+). In terms of biological role, attaches a formyl group to the free amino group of methionyl-tRNA(fMet). The formyl group appears to play a dual role in the initiator identity of N-formylmethionyl-tRNA by promoting its recognition by IF2 and preventing the misappropriation of this tRNA by the elongation apparatus. The polypeptide is Methionyl-tRNA formyltransferase (Prochlorococcus marinus subsp. pastoris (strain CCMP1986 / NIES-2087 / MED4)).